A 395-amino-acid polypeptide reads, in one-letter code: MAKEKFDRSKEHANIGTIGHVDHGKTTLTAAIATVLAKNGDSVAQSYDMIDNAPEEKERGITINTSHIEYTTDKRHYAHVDCPGHADYVKNMITGAAQMDGAILVVSAADGPMPQTREHILLSRNVGVPALVVFLNKVDMVDDEELLELVEMEVRDLLSEYDFPGDDVPVISGSALKALEGDADYEQKILDLMQAVDDFIPTPERDSDKPFMMPVEDVFSITGRGTVATGRVERGQIKVGEEIEIIGMQEESSKTTVTGVEMFRKLLDYAEAGDNIGALLRGVSRDDVQRGQVLAAPGTITPHTKFKADVYVLSKDEGGRHTPFFTNYRPQFYFRTTDVTGVVNLPEGTEMVMPGDNVEMDVELISPIAIEDGTRFSIREGGRTVGSGVVTVINE.

The tr-type G domain maps to 10-204 (KEHANIGTIG…AVDDFIPTPE (195 aa)). A G1 region spans residues 19-26 (GHVDHGKT). 19 to 26 (GHVDHGKT) serves as a coordination point for GTP. Thr26 is a Mg(2+) binding site. The segment at 60-64 (GITIN) is G2. Positions 81–84 (DCPG) are G3. Residues 81-85 (DCPGH) and 136-139 (NKVD) contribute to the GTP site. The G4 stretch occupies residues 136 to 139 (NKVD). The tract at residues 174–176 (SAL) is G5.

This sequence belongs to the TRAFAC class translation factor GTPase superfamily. Classic translation factor GTPase family. EF-Tu/EF-1A subfamily. As to quaternary structure, monomer.

It localises to the cytoplasm. It catalyses the reaction GTP + H2O = GDP + phosphate + H(+). Functionally, GTP hydrolase that promotes the GTP-dependent binding of aminoacyl-tRNA to the A-site of ribosomes during protein biosynthesis. The polypeptide is Elongation factor Tu (Staphylococcus saprophyticus subsp. saprophyticus (strain ATCC 15305 / DSM 20229 / NCIMB 8711 / NCTC 7292 / S-41)).